The primary structure comprises 66 residues: UPF0434 protein Mnod_1613 (66 aa).

This sequence belongs to the UPF0434 family.

The chain is UPF0434 protein Mnod_1613 from Methylobacterium nodulans (strain LMG 21967 / CNCM I-2342 / ORS 2060).